The following is a 723-amino-acid chain: Translation initiation factor IF-2 (723 aa).

The tract at residues 112–138 (KIFNNKKNKKQKPQQAPQQEVQKKKEK) is disordered. Over residues 114–123 (FNNKKNKKQK) the composition is skewed to basic residues. Residues 224–393 (ERPPVVTIMG…LLVSEMEELK (170 aa)) enclose the tr-type G domain. The interval 233–240 (GHVDHGKT) is G1. 233–240 (GHVDHGKT) contacts GTP. A G2 region spans residues 258-262 (GITQH). The tract at residues 279-282 (DTPG) is G3. GTP-binding positions include 279–283 (DTPGH) and 333–336 (NKID). A G4 region spans residues 333–336 (NKID). The interval 369-371 (SAL) is G5.

The protein belongs to the TRAFAC class translation factor GTPase superfamily. Classic translation factor GTPase family. IF-2 subfamily.

It is found in the cytoplasm. Its function is as follows. One of the essential components for the initiation of protein synthesis. Protects formylmethionyl-tRNA from spontaneous hydrolysis and promotes its binding to the 30S ribosomal subunits. Also involved in the hydrolysis of GTP during the formation of the 70S ribosomal complex. In Anoxybacillus flavithermus (strain DSM 21510 / WK1), this protein is Translation initiation factor IF-2.